Consider the following 921-residue polypeptide: TRPM8 channel-associated factor 1 (921 aa).

Residues 542 to 841 (YCWMSTGLYI…TYLQLQEAFG (300 aa)) form the Peptidase M60 domain.

It belongs to the TCAF family. In terms of assembly, interacts with TRPM8 (via N-terminus and C-terminus domains); the interaction inhibits TRPM8 channel activity. Interacts with TRPV6.

It localises to the cell membrane. Its function is as follows. Positively regulates the plasma membrane cation channel TRPM8 activity. Involved in the recruitment of TRPM8 to the cell surface. Promotes prostate cancer cell migration inhibition in a TRPM8-dependent manner. This chain is TRPM8 channel-associated factor 1, found in Bos taurus (Bovine).